Here is an 806-residue protein sequence, read N- to C-terminus: Mitochondrial intermediate peptidase (806 aa).

A mitochondrion-targeting transit peptide spans 1–29 (MLSRHLTVLRSACRVSHDLRVPSTQAVRK). His-581 serves as a coordination point for Zn(2+). The active site involves Glu-582. Residues His-585 and His-588 each coordinate Zn(2+).

It belongs to the peptidase M3 family. Requires Zn(2+) as cofactor.

It localises to the mitochondrion matrix. The catalysed reaction is Release of an N-terminal octapeptide as second stage of processing of some proteins imported into the mitochondrion.. In terms of biological role, cleaves proteins, imported into the mitochondrion, to their mature size. While most mitochondrial precursor proteins are processed to the mature form in one step by mitochondrial processing peptidase (MPP), the sequential cleavage by MIP of an octapeptide after initial processing by MPP is a required step for a subgroup of nuclear-encoded precursor proteins destined for the matrix or the inner membrane. This Malassezia globosa (strain ATCC MYA-4612 / CBS 7966) (Dandruff-associated fungus) protein is Mitochondrial intermediate peptidase (OCT1).